The chain runs to 472 residues: Threonine synthase-like 2 (472 aa).

Lys113 carries the post-translational modification N6-(pyridoxal phosphate)lysine.

Belongs to the threonine synthase family. The cofactor is pyridoxal 5'-phosphate.

Functionally, acts as a catabolic phospho-lyase on both gamma- and beta-phosphorylated substrates. Degrades O-phospho-threonine (PThr) to alpha-ketobutyrate, ammonia and phosphate. This Xenopus laevis (African clawed frog) protein is Threonine synthase-like 2 (thnsl2).